The chain runs to 161 residues: Cyclic pyranopterin monophosphate synthase (161 aa).

Residues 75 to 77 (LCH) and 113 to 114 (ME) contribute to the substrate site. Aspartate 128 is a catalytic residue.

This sequence belongs to the MoaC family. In terms of assembly, homohexamer; trimer of dimers.

The enzyme catalyses (8S)-3',8-cyclo-7,8-dihydroguanosine 5'-triphosphate = cyclic pyranopterin phosphate + diphosphate. Its pathway is cofactor biosynthesis; molybdopterin biosynthesis. Catalyzes the conversion of (8S)-3',8-cyclo-7,8-dihydroguanosine 5'-triphosphate to cyclic pyranopterin monophosphate (cPMP). The chain is Cyclic pyranopterin monophosphate synthase from Salmonella dublin (strain CT_02021853).